The chain runs to 526 residues: D-arabinono-1,4-lactone oxidase (526 aa).

Residues 19–193 (YSAKPERYFQ…VSATIRVVPG (175 aa)) enclose the FAD-binding PCMH-type domain. Position 56 is a pros-8alpha-FAD histidine (H56).

This sequence belongs to the oxygen-dependent FAD-linked oxidoreductase family. As to quaternary structure, monomer. Requires FAD as cofactor. Post-translationally, the N-terminus is blocked.

The protein resides in the mitochondrion membrane. It catalyses the reaction D-arabinono-1,4-lactone + O2 = dehydro-D-arabinono-1,4-lactone + H2O2 + H(+). It participates in cofactor biosynthesis; D-erythroascorbate biosynthesis; dehydro-D-arabinono-1,4-lactone from D-arabinose: step 2/2. Functionally, can oxidize L-gulono-1,4-lactone as well as D-arabinono-1,4-lactone and L-galactono-1,4-lactone. The polypeptide is D-arabinono-1,4-lactone oxidase (ALO1) (Saccharomyces cerevisiae (strain ATCC 204508 / S288c) (Baker's yeast)).